Here is a 790-residue protein sequence, read N- to C-terminus: Vacuolar protein sorting-associated protein 35B (790 aa).

It belongs to the VPS35 family. Component of the retromer complex which consists of VPS29 (MAG1), VPS26 (VPS26A or VPS26B), VPS35 (VPS35A or VPS35B or VPS35C), VPS5/17 (SNX1 or SNX2A or SNX2B). Component of a retromer subcomplex consisting of VPS29 (MAG1), VPS26 (VPS26A or VPS26B), VPS35 (VPS35A or VPS35B or VPS35C). In terms of tissue distribution, expressed in siliques and maturing seeds (at protein level).

It localises to the cytoplasm. Its subcellular location is the endosome membrane. The protein localises to the prevacuolar compartment membrane. It is found in the golgi apparatus. The protein resides in the trans-Golgi network membrane. Functionally, plays a role in vesicular protein sorting. Component of the membrane-associated retromer complex which is essential in endosome-to-Golgi retrograde transport. Also involved in the efficient sorting of seed storage proteins globulin 12S and albumin 2S. The VPS29-VPS26-VPS35 subcomplex may be involved in recycling of specific cargos from endosome to the plasma membrane. This chain is Vacuolar protein sorting-associated protein 35B (VPS35B), found in Arabidopsis thaliana (Mouse-ear cress).